The chain runs to 691 residues: Homeobox protein NOBOX (691 aa).

Positions 94 to 103 (ELTRGQKAGE) are enriched in basic and acidic residues. The disordered stretch occupies residues 94-233 (ELTRGQKAGE…NSARATHNPV (140 aa)). The segment covering 216–228 (PTSSPGAPNSARA) has biased composition (polar residues). Positions 272–363 (RKKTRTLYRS…NRRAKWRKME (92 aa)) form a DNA-binding region, homeobox. 3 disordered regions span residues 366-385 (NGKE…SQCS), 394-437 (VPME…AQRV), and 635-691 (QALG…SHVP). Positions 395 to 405 (PMEPKPDPFPQ) are enriched in pro residues. Polar residues predominate over residues 420–432 (TSDQTLAPTQPSE). Over residues 679–691 (EEARGDDKNSHVP) the composition is skewed to basic and acidic residues.

Expressed in ovaries, testes and pancreas. Expressed within all stages of the adult female germline, from primordial follicles through to MII oocytes.

Its subcellular location is the nucleus. Its function is as follows. Transcription factor which may play a role in oogenesis. Binds preferentially to the DNA sequences 5'-TAATTG-3', 5'-TAGTTG-3' and 5'-TAATTA-3'. This is Homeobox protein NOBOX (NOBOX) from Homo sapiens (Human).